The primary structure comprises 438 residues: Alpha-methylserine aldolase (438 aa).

Lysine 252 carries the N6-(pyridoxal phosphate)lysine modification.

Belongs to the SHMT family. Alpha-methylserine aldolase subfamily. Homodimer. Requires pyridoxal 5'-phosphate as cofactor.

It carries out the reaction 2-methyl-L-serine = formaldehyde + L-alanine. With respect to regulation, in the alpha-methyl-L-serine synthesis reaction, activity is inhibited by an excess amount of formaldehyde (at a concentration greater than 10 mM). Its function is as follows. Catalyzes the reversible interconversion of alpha-methyl-L-serine to L-alanine and formaldehyde. Cannot use alpha-methyl-D-serine, L-serine or D-serine. Cannot use D-alanine instead of L-alanine as the substrate for alpha-methyl-L-serine synthesis. Does not require tetrahydrofolate (THF) for activity. The protein is Alpha-methylserine aldolase of Ralstonia sp.